Consider the following 907-residue polypeptide: Translation initiation factor IF-2 (907 aa).

The segment at 1-305 is disordered; the sequence is MSEGNDQDQG…SLASVRRQRE (305 aa). Residues 62–80 are compositionally biased toward gly residues; the sequence is SGSGSSGGGRAGGRGGSGG. Basic and acidic residues-rich tracts occupy residues 93 to 114 and 122 to 158; these read RVLEEQRAEAVRREQERREQEK and EEARRRDEEARRAAEDEVREKEEAAARAREEEAERRA. Positions 211–230 are enriched in low complexity; sequence PARPVTPSRPATPAATPQAP. Composition is skewed to basic and acidic residues over residues 240–249 and 271–280; these read RVGEAEDDRR and KGGDSRRSGR. The tr-type G domain maps to 406 to 576; that stretch reads PRPPVVTVMG…LLQAEMLDLR (171 aa). Positions 415–422 are G1; it reads GHVDHGKT. Residue 415–422 participates in GTP binding; it reads GHVDHGKT. The segment at 440-444 is G2; it reads GITQH. Residues 462-465 form a G3 region; it reads DTPG. GTP is bound by residues 462–466 and 516–519; these read DTPGH and NKCD. A G4 region spans residues 516–519; it reads NKCD. The interval 552 to 554 is G5; it reads SAL.

Belongs to the TRAFAC class translation factor GTPase superfamily. Classic translation factor GTPase family. IF-2 subfamily.

It is found in the cytoplasm. Functionally, one of the essential components for the initiation of protein synthesis. Protects formylmethionyl-tRNA from spontaneous hydrolysis and promotes its binding to the 30S ribosomal subunits. Also involved in the hydrolysis of GTP during the formation of the 70S ribosomal complex. This is Translation initiation factor IF-2 from Gluconacetobacter diazotrophicus (strain ATCC 49037 / DSM 5601 / CCUG 37298 / CIP 103539 / LMG 7603 / PAl5).